Consider the following 148-residue polypeptide: 3-hydroxyacyl-[acyl-carrier-protein] dehydratase FabZ (148 aa).

The active site involves histidine 49.

Belongs to the thioester dehydratase family. FabZ subfamily.

The protein localises to the cytoplasm. It catalyses the reaction a (3R)-hydroxyacyl-[ACP] = a (2E)-enoyl-[ACP] + H2O. Involved in unsaturated fatty acids biosynthesis. Catalyzes the dehydration of short chain beta-hydroxyacyl-ACPs and long chain saturated and unsaturated beta-hydroxyacyl-ACPs. The protein is 3-hydroxyacyl-[acyl-carrier-protein] dehydratase FabZ of Ehrlichia canis (strain Jake).